The following is a 604-amino-acid chain: Serine protease 56 (604 aa).

The signal sequence occupies residues 1 to 22; sequence MPLAMLLLLLLLLSPDSQTAHG. The tract at residues 70 to 94 is disordered; sequence CQGPGRPRPQAPLLQDPPEPVQCGE. The segment covering 75-89 has biased composition (pro residues); that stretch reads RPRPQAPLLQDPPEP. Asn101 carries an N-linked (GlcNAc...) asparagine glycan. Positions 109–341 constitute a Peptidase S1 domain; sequence IVGGSTAPSG…FKDWLQEQMS (233 aa). Cys134 and Cys150 are joined by a disulfide. Catalysis depends on charge relay system residues His149 and Asp195. 3 disulfides stabilise this stretch: Cys229/Cys296, Cys260/Cys275, and Cys286/Cys317. The active-site Charge relay system is Ser290. Disordered regions lie at residues 424 to 452 and 578 to 604; these read RPGL…PREQ and PQAP…PPVP.

This sequence belongs to the peptidase S1 family. Expressed in the eye: present in the retina and in the optic nerve.

The protein localises to the endoplasmic reticulum membrane. Its function is as follows. Serine protease required during eye development. The polypeptide is Serine protease 56 (Prss56) (Mus musculus (Mouse)).